Here is a 456-residue protein sequence, read N- to C-terminus: tRNA modification GTPase MnmE (456 aa).

Residues R23, E80, and K122 each coordinate (6S)-5-formyl-5,6,7,8-tetrahydrofolate. Positions 218–380 (AKRIVIVGPP…LKKHLSNRQK (163 aa)) constitute a TrmE-type G domain. N228 is a binding site for K(+). GTP-binding positions include 228-233 (NAGKSS), 247-253 (TDLPGTT), and 272-275 (DTAG). A Mg(2+)-binding site is contributed by S232. 3 residues coordinate K(+): T247, L249, and T252. Residue T253 coordinates Mg(2+). Position 456 (K456) interacts with (6S)-5-formyl-5,6,7,8-tetrahydrofolate.

Belongs to the TRAFAC class TrmE-Era-EngA-EngB-Septin-like GTPase superfamily. TrmE GTPase family. Homodimer. Heterotetramer of two MnmE and two MnmG subunits. It depends on K(+) as a cofactor.

The protein resides in the cytoplasm. Its function is as follows. Exhibits a very high intrinsic GTPase hydrolysis rate. Involved in the addition of a carboxymethylaminomethyl (cmnm) group at the wobble position (U34) of certain tRNAs, forming tRNA-cmnm(5)s(2)U34. In Buchnera aphidicola subsp. Schizaphis graminum (strain Sg), this protein is tRNA modification GTPase MnmE.